Here is a 495-residue protein sequence, read N- to C-terminus: Glycerol kinase (495 aa).

T13 serves as a coordination point for ADP. ATP contacts are provided by T13, T14, and S15. Residue T13 participates in sn-glycerol 3-phosphate binding. R17 serves as a coordination point for ADP. Sn-glycerol 3-phosphate contacts are provided by R83, E84, Y135, and D244. Positions 83, 84, 135, 244, and 245 each coordinate glycerol. ADP is bound by residues T266 and G309. Residues T266, G309, Q313, and G410 each coordinate ATP. Residues G410 and N414 each coordinate ADP.

This sequence belongs to the FGGY kinase family.

It carries out the reaction glycerol + ATP = sn-glycerol 3-phosphate + ADP + H(+). It participates in polyol metabolism; glycerol degradation via glycerol kinase pathway; sn-glycerol 3-phosphate from glycerol: step 1/1. Inhibited by fructose 1,6-bisphosphate (FBP). Its function is as follows. Key enzyme in the regulation of glycerol uptake and metabolism. Catalyzes the phosphorylation of glycerol to yield sn-glycerol 3-phosphate. The polypeptide is Glycerol kinase (Shewanella woodyi (strain ATCC 51908 / MS32)).